Reading from the N-terminus, the 59-residue chain is Gallinacin-14 (59 aa).

Residues 1-18 (MGIFLLFLVLLAVPQAAP) form the signal peptide. 3 cysteine pairs are disulfide-bonded: C25–C54, C32–C47, and C37–C55.

This sequence belongs to the beta-defensin family.

The protein localises to the secreted. It localises to the cytoplasmic granule. Its function is as follows. Has bactericidal activity. The polypeptide is Gallinacin-14 (GAL14) (Gallus gallus (Chicken)).